Reading from the N-terminus, the 959-residue chain is Lon protease homolog, mitochondrial (959 aa).

The transit peptide at 1-67 directs the protein to the mitochondrion; sequence MAASTGYVRL…GPAIGGQWRG (67 aa). Disordered regions lie at residues 77–102 and 218–257; these read GAFS…GSAG and RQLE…HPAE. The span at 91 to 102 shows a compositional bias: gly residues; it reads EEGAGGAGGSAG. The region spanning 124 to 370 is the Lon N-terminal domain; the sequence is LPLIAITRNP…KALSLLKKEF (247 aa). Basic residues predominate over residues 233-243; the sequence is HKPRRKSKRGK. Positions 244-256 are enriched in basic and acidic residues; the sequence is KEAEDELSARHPA. Residue 523–530 participates in ATP binding; the sequence is GPPGVGKT. The 191-residue stretch at 759-949 folds into the Lon proteolytic domain; it reads VTPPGVVMGL…REIFDIAFPD (191 aa). Residues serine 855 and lysine 898 contribute to the active site.

This sequence belongs to the peptidase S16 family. Homohexamer. Organized in a ring with a central cavity. The ATP-binding and proteolytic domains (AP-domain) form a hexameric chamber, while the N-terminal domain is arranged as a trimer of dimers. DNA and RNA binding is stimulated by substrate and inhibited by ATP binding. Interacts with TWNK and mitochondrial DNA polymerase subunit POLG. In terms of tissue distribution, duodenum, heart, lung and liver, but not thymus.

The protein localises to the mitochondrion matrix. The enzyme catalyses Hydrolysis of proteins in presence of ATP.. Its activity is regulated as follows. Peptidase activity is subject to substrate inhibition by ATP. ATP-dependent serine protease that mediates the selective degradation of misfolded, unassembled or oxidatively damaged polypeptides as well as certain short-lived regulatory proteins in the mitochondrial matrix. Endogenous substrates include mitochondrial steroidogenic acute regulatory (StAR) protein, DELE1, helicase Twinkle (TWNK) and the large ribosomal subunit protein MRPL32/bL32m. MRPL32/bL32m is protected from degradation by LONP1 when it is bound to a nucleic acid (RNA), but TWNK is not. May also have a chaperone function in the assembly of inner membrane protein complexes. Participates in the regulation of mitochondrial gene expression and in the maintenance of the integrity of the mitochondrial genome. Binds to mitochondrial promoters and RNA in a single-stranded, site-specific, and strand-specific manner. May regulate mitochondrial DNA replication and/or gene expression using site-specific, single-stranded DNA binding to target the degradation of regulatory proteins binding to adjacent sites in mitochondrial promoters. This Homo sapiens (Human) protein is Lon protease homolog, mitochondrial.